The chain runs to 201 residues: Pyridoxal 5'-phosphate synthase subunit PdxT (201 aa).

L-glutamine is bound at residue 51 to 53 (GES). The active-site Nucleophile is the Cys-83. L-glutamine contacts are provided by residues Arg-112 and 141–142 (IR). Residues His-182 and Glu-184 each act as charge relay system in the active site.

This sequence belongs to the glutaminase PdxT/SNO family. As to quaternary structure, in the presence of PdxS, forms a dodecamer of heterodimers. Only shows activity in the heterodimer.

The catalysed reaction is aldehydo-D-ribose 5-phosphate + D-glyceraldehyde 3-phosphate + L-glutamine = pyridoxal 5'-phosphate + L-glutamate + phosphate + 3 H2O + H(+). The enzyme catalyses L-glutamine + H2O = L-glutamate + NH4(+). It participates in cofactor biosynthesis; pyridoxal 5'-phosphate biosynthesis. Its function is as follows. Catalyzes the hydrolysis of glutamine to glutamate and ammonia as part of the biosynthesis of pyridoxal 5'-phosphate. The resulting ammonia molecule is channeled to the active site of PdxS. This chain is Pyridoxal 5'-phosphate synthase subunit PdxT, found in Thermobifida fusca (strain YX).